A 282-amino-acid chain; its full sequence is Formamidopyrimidine-DNA glycosylase (282 aa).

The active-site Schiff-base intermediate with DNA is the Pro-2. Glu-3 acts as the Proton donor in catalysis. Lys-60 serves as the catalytic Proton donor; for beta-elimination activity. DNA is bound by residues His-99, Arg-118, and Lys-163. Residues 248–282 (LVYRRSGKNCKKCGEKILREKICGRSTHWCPNCQK) form an FPG-type zinc finger. The active-site Proton donor; for delta-elimination activity is Arg-272.

It belongs to the FPG family. Monomer. The cofactor is Zn(2+).

It catalyses the reaction Hydrolysis of DNA containing ring-opened 7-methylguanine residues, releasing 2,6-diamino-4-hydroxy-5-(N-methyl)formamidopyrimidine.. The catalysed reaction is 2'-deoxyribonucleotide-(2'-deoxyribose 5'-phosphate)-2'-deoxyribonucleotide-DNA = a 3'-end 2'-deoxyribonucleotide-(2,3-dehydro-2,3-deoxyribose 5'-phosphate)-DNA + a 5'-end 5'-phospho-2'-deoxyribonucleoside-DNA + H(+). In terms of biological role, involved in base excision repair of DNA damaged by oxidation or by mutagenic agents. Acts as a DNA glycosylase that recognizes and removes damaged bases. Has a preference for oxidized purines, such as 7,8-dihydro-8-oxoguanine (8-oxoG). Has AP (apurinic/apyrimidinic) lyase activity and introduces nicks in the DNA strand. Cleaves the DNA backbone by beta-delta elimination to generate a single-strand break at the site of the removed base with both 3'- and 5'-phosphates. In Prochlorococcus marinus (strain NATL1A), this protein is Formamidopyrimidine-DNA glycosylase.